Consider the following 923-residue polypeptide: Inorganic phosphate transporter PHO87 (923 aa).

Positions 1 to 334 constitute an SPX domain; sequence MRFSHFLKYN…HMNTRQELIE (334 aa). The Extracellular segment spans residues 1–461; sequence MRFSHFLKYN…KLFFGKRAMK (461 aa). 2 disordered regions span residues 40-74 and 86-107; these read ETPT…SSSK and FGSK…IDGN. The span at 95-104 shows a compositional bias: basic and acidic residues; the sequence is KRGDSDEKAI. Residue K102 forms a Glycyl lysine isopeptide (Lys-Gly) (interchain with G-Cter in ubiquitin) linkage. N-linked (GlcNAc...) asparagine glycans are attached at residues N162, N202, and N274. The chain crosses the membrane as a helical span at residues 462-482; the sequence is IGFIIIVTGVLLGVKTFNDPV. Topologically, residues 483-493 are cytoplasmic; sequence EHRCMALVECC. A helical membrane pass occupies residues 494–514; that stretch reads AFLWASEAIPLHITGLLVPLL. Topologically, residues 515-537 are extracellular; it reads TVLFRVLKDDDGKVMGAAAASTE. The helical transmembrane segment at 538–558 threads the bilayer; sequence ILGTMWSSTIMILLAGFTLGE. Over 559 to 583 the chain is Cytoplasmic; sequence ALSQYNVAKVLASWLLALAGTKPRN. The helical transmembrane segment at 584 to 604 threads the bilayer; sequence VLLMAMSVVFFLSMWISNVAS. The Extracellular portion of the chain corresponds to 605–627; that stretch reads PVLTYSLLTPLLDPLDYTSPFAK. Residues 628-648 traverse the membrane as a helical segment; that stretch reads ALVMGVALSADIGGMASPISS. At 649 to 667 the chain is on the cytoplasmic side; it reads PQNIISMQYLKPYGIGWGQ. Residues 668-688 form a helical membrane-spanning segment; sequence FFAVALPTGILSMLCSWALMI. Topologically, residues 689 to 707 are extracellular; the sequence is LTFKIGKTKLEKFKPIRTR. The chain crosses the membrane as a helical span at residues 708-728; the sequence is FTIKQYFIIIVTIATILLWCV. At 729–735 the chain is on the cytoplasmic side; it reads ESQIESA. The chain crosses the membrane as a helical span at residues 736-756; sequence FGSSGEIAVIPIVLFFGTGLL. Residues 757–767 are Extracellular-facing; sequence STKDFNTFPWS. Residues 768-788 form a helical membrane-spanning segment; it reads IVVLAMGGIALGKAVSSSGLL. Over 789-802 the chain is Cytoplasmic; the sequence is VTIARALQKKIQND. Residues 803-823 form a helical membrane-spanning segment; sequence GVFAILCIFGILMLVVGTFVS. Residues 824-849 lie on the Extracellular side of the membrane; sequence HTVSAIIIIPLVQEVGDKLSDPKAAP. A helical transmembrane segment spans residues 850-870; sequence ILVFGCALLASCGMGLASSGF. Over 871–898 the chain is Cytoplasmic; that stretch reads PNVTAISMTDKKGNRWLTVGAFISRGVP. Residues 899-919 form a helical membrane-spanning segment; that stretch reads ASLLAFVCVITLGYGISSSVL. Residues 920-923 are Extracellular-facing; it reads KGST.

It belongs to the CitM (TC 2.A.11) transporter family.

It localises to the membrane. Functionally, involved in the uptake of inorganic phosphate. This chain is Inorganic phosphate transporter PHO87 (PHO87), found in Saccharomyces cerevisiae (strain ATCC 204508 / S288c) (Baker's yeast).